We begin with the raw amino-acid sequence, 241 residues long: Small ribosomal subunit protein uS3c (241 aa).

This sequence belongs to the universal ribosomal protein uS3 family. Part of the 30S ribosomal subunit.

The protein resides in the plastid. The chain is Small ribosomal subunit protein uS3c (rps3) from Helicosporidium sp. subsp. Simulium jonesii (Green alga).